We begin with the raw amino-acid sequence, 154 residues long: 6,7-dimethyl-8-ribityllumazine synthase (154 aa).

5-amino-6-(D-ribitylamino)uracil is bound by residues Phe-26, 60–62 (ALE), and 84–86 (CII). 89–90 (ET) provides a ligand contact to (2S)-2-hydroxy-3-oxobutyl phosphate. The Proton donor role is filled by His-92. Asn-117 is a 5-amino-6-(D-ribitylamino)uracil binding site. Residue Arg-131 participates in (2S)-2-hydroxy-3-oxobutyl phosphate binding.

The protein belongs to the DMRL synthase family.

The catalysed reaction is (2S)-2-hydroxy-3-oxobutyl phosphate + 5-amino-6-(D-ribitylamino)uracil = 6,7-dimethyl-8-(1-D-ribityl)lumazine + phosphate + 2 H2O + H(+). Its pathway is cofactor biosynthesis; riboflavin biosynthesis; riboflavin from 2-hydroxy-3-oxobutyl phosphate and 5-amino-6-(D-ribitylamino)uracil: step 1/2. Functionally, catalyzes the formation of 6,7-dimethyl-8-ribityllumazine by condensation of 5-amino-6-(D-ribitylamino)uracil with 3,4-dihydroxy-2-butanone 4-phosphate. This is the penultimate step in the biosynthesis of riboflavin. The sequence is that of 6,7-dimethyl-8-ribityllumazine synthase from Acidovorax ebreus (strain TPSY) (Diaphorobacter sp. (strain TPSY)).